The sequence spans 156 residues: Small ribosomal subunit protein uS7 (156 aa).

It belongs to the universal ribosomal protein uS7 family. Part of the 30S ribosomal subunit. Contacts proteins S9 and S11.

Functionally, one of the primary rRNA binding proteins, it binds directly to 16S rRNA where it nucleates assembly of the head domain of the 30S subunit. Is located at the subunit interface close to the decoding center, probably blocks exit of the E-site tRNA. The chain is Small ribosomal subunit protein uS7 from Microcystis aeruginosa (strain NIES-843 / IAM M-2473).